The sequence spans 83 residues: MNEILSKIKSIIIEKLGVDEKKVIPEASFINDLGADSLDSIELIMEFEKEFDIIISDDIAEKLITVDDANQYIKKYLDDKKSF.

A Carrier domain is found at 2–77 (NEILSKIKSI…DANQYIKKYL (76 aa)). Position 37 is an O-(pantetheine 4'-phosphoryl)serine (S37).

The protein belongs to the acyl carrier protein (ACP) family. Post-translationally, 4'-phosphopantetheine is transferred from CoA to a specific serine of apo-ACP by AcpS. This modification is essential for activity because fatty acids are bound in thioester linkage to the sulfhydryl of the prosthetic group.

It localises to the cytoplasm. It participates in lipid metabolism; fatty acid biosynthesis. Its function is as follows. Carrier of the growing fatty acid chain in fatty acid biosynthesis. The protein is Acyl carrier protein of Karelsulcia muelleri (strain GWSS) (Sulcia muelleri).